Consider the following 155-residue polypeptide: Transcriptional regulator MraZ (155 aa).

2 consecutive SpoVT-AbrB domains span residues 7-63 and 92-135; these read REQH…EPSV and LDQT…EPLR.

This sequence belongs to the MraZ family. In terms of assembly, forms oligomers.

The protein resides in the cytoplasm. It is found in the nucleoid. This is Transcriptional regulator MraZ from Chlorobaculum tepidum (strain ATCC 49652 / DSM 12025 / NBRC 103806 / TLS) (Chlorobium tepidum).